Reading from the N-terminus, the 208-residue chain is Thymidylate kinase (208 aa).

Position 10–17 (10–17 (GPDGSGKT)) interacts with ATP.

This sequence belongs to the thymidylate kinase family.

The enzyme catalyses dTMP + ATP = dTDP + ADP. Phosphorylation of dTMP to form dTDP in both de novo and salvage pathways of dTTP synthesis. This Listeria welshimeri serovar 6b (strain ATCC 35897 / DSM 20650 / CCUG 15529 / CIP 8149 / NCTC 11857 / SLCC 5334 / V8) protein is Thymidylate kinase.